Consider the following 192-residue polypeptide: Signal peptidase complex catalytic subunit sec11 (192 aa).

At 1 to 18 the chain is on the cytoplasmic side; sequence MLSFLSSNLSSTRQSLAQ. A helical; Signal-anchor for type II membrane protein membrane pass occupies residues 19 to 39; sequence VLNFALVLSTAFMLWKGLSVF. Over 40–192 the chain is Lumenal; it reads TASSSPIVVV…GLMVILQREQ (153 aa). Residues serine 53, histidine 92, and aspartate 133 each act as charge relay system in the active site. The interval 177 to 188 is C-terminal short (CTS) helix; sequence VLLGIMGLMVIL.

This sequence belongs to the peptidase S26B family. As to quaternary structure, component of the signal peptidase complex (SPC) composed of a catalytic subunit SEC11 and three accessory subunits SPC1, SPC2 and SPC3. The complex induces a local thinning of the ER membrane which is used to measure the length of the signal peptide (SP) h-region of protein substrates. This ensures the selectivity of the complex towards h-regions shorter than 18-20 amino acids. SPC associates with the translocon complex.

It is found in the endoplasmic reticulum membrane. The catalysed reaction is Cleavage of hydrophobic, N-terminal signal or leader sequences from secreted and periplasmic proteins.. Functionally, catalytic component of the signal peptidase complex (SPC) which catalyzes the cleavage of N-terminal signal sequences from nascent proteins as they are translocated into the lumen of the endoplasmic reticulum. Specifically cleaves N-terminal signal peptides that contain a hydrophobic alpha-helix (h-region) shorter than 18-20 amino acids. The sequence is that of Signal peptidase complex catalytic subunit sec11 (sec11) from Neosartorya fischeri (strain ATCC 1020 / DSM 3700 / CBS 544.65 / FGSC A1164 / JCM 1740 / NRRL 181 / WB 181) (Aspergillus fischerianus).